The primary structure comprises 415 residues: uncharacterized protein (415 aa).

H88 provides a ligand contact to Zn(2+). Residue D90 is part of the active site. Zn(2+) is bound at residue D121. E155 acts as the Proton acceptor in catalysis. Residues E156, D185, and H392 each coordinate Zn(2+).

It belongs to the peptidase M20A family. Requires Zn(2+) as cofactor. Co(2+) serves as cofactor.

This is an uncharacterized protein from Methanococcus maripaludis (strain DSM 14266 / JCM 13030 / NBRC 101832 / S2 / LL).